Consider the following 267-residue polypeptide: Thiamine thiazole synthase (267 aa).

Residues Ser-41, 60-61 (ER), Gly-68, Val-132, and 160-162 (HVD) each bind NAD(+). 2 residues coordinate Fe cation: Asp-162 and His-177. Residue Met-227 participates in NAD(+) binding. Position 237 (Arg-237) interacts with glycine.

This sequence belongs to the THI4 family. Homooctamer; tetramer of dimers. Requires Fe(2+) as cofactor.

It carries out the reaction hydrogen sulfide + glycine + NAD(+) = ADP-5-ethyl-4-methylthiazole-2-carboxylate + nicotinamide + 3 H2O + H(+). Its pathway is cofactor biosynthesis; thiamine diphosphate biosynthesis. In terms of biological role, involved in the biosynthesis of the thiazole moiety of thiamine. Catalyzes the conversion of NAD and glycine to adenosine diphosphate 5-(2-hydroxyethyl)-4-methylthiazole-2-carboxylate (ADT), an adenylated thiazole intermediate, using free sulfide as a source of sulfur. The chain is Thiamine thiazole synthase from Saccharolobus islandicus (strain L.S.2.15 / Lassen #1) (Sulfolobus islandicus).